A 399-amino-acid chain; its full sequence is Nicotinate phosphoribosyltransferase (399 aa).

His-217 carries the phosphohistidine; by autocatalysis modification.

The protein belongs to the NAPRTase family. In terms of processing, transiently phosphorylated on a His residue during the reaction cycle. Phosphorylation strongly increases the affinity for substrates and increases the rate of nicotinate D-ribonucleotide production. Dephosphorylation regenerates the low-affinity form of the enzyme, leading to product release.

It carries out the reaction nicotinate + 5-phospho-alpha-D-ribose 1-diphosphate + ATP + H2O = nicotinate beta-D-ribonucleotide + ADP + phosphate + diphosphate. It participates in cofactor biosynthesis; NAD(+) biosynthesis; nicotinate D-ribonucleotide from nicotinate: step 1/1. Its function is as follows. Catalyzes the synthesis of beta-nicotinate D-ribonucleotide from nicotinate and 5-phospho-D-ribose 1-phosphate at the expense of ATP. The protein is Nicotinate phosphoribosyltransferase of Burkholderia ambifaria (strain MC40-6).